Consider the following 602-residue polypeptide: Elongation factor 4 (602 aa).

In terms of domain architecture, tr-type G spans 2 to 184; that stretch reads NHIRNFSIIA…AVVAKVPPPK (183 aa). GTP-binding positions include 14–19 and 131–134; these read DHGKST and NKMD.

It belongs to the TRAFAC class translation factor GTPase superfamily. Classic translation factor GTPase family. LepA subfamily.

The protein resides in the cell inner membrane. It catalyses the reaction GTP + H2O = GDP + phosphate + H(+). Its function is as follows. Required for accurate and efficient protein synthesis under certain stress conditions. May act as a fidelity factor of the translation reaction, by catalyzing a one-codon backward translocation of tRNAs on improperly translocated ribosomes. Back-translocation proceeds from a post-translocation (POST) complex to a pre-translocation (PRE) complex, thus giving elongation factor G a second chance to translocate the tRNAs correctly. Binds to ribosomes in a GTP-dependent manner. In Delftia acidovorans (strain DSM 14801 / SPH-1), this protein is Elongation factor 4.